The primary structure comprises 500 residues: MAIKANEISSLIKKQIENFTPDFEVAETGVVTYVGDGIARAYGLENAMSGELVEFSNGILGMAQNLDATDVGIIVLGDFLSIREGDTVKRTGKIMEIQVGEELIGRVVNPLGQPVDGLGELNTGKTRPVEAKAPGVMQRKSVSEPLQTGLKAIDALVPIGRGQRELIIGDRQTGKTSVAIDAILNQKGQDMICIYVAIGQKESTVRTQVETLRKLGAMDYTIVVTASASQPSPLLYIAPYAGAAMGEEFMYNGKHVLVVYDDLSKQAVAYRELSLLLRRPPGREAYPGDVFYLHSRLLERAAKLSDDLGGGSMTALPFIETQAGDISAYIATNVISITDGQIFLENDLFYSGVRPAIDAGSSVSRVGGAAQIKAMKKVAGTLRLDLASFRELEAFTQFGSDLDEATQAKLNRGRRTVEVLKQPLHKPLAVEKQVLILYALTHGHLDNVPVDDVLDFETKMFDFFDANYADLLNVITDTKDLPEEAKLDEAIKAFKNTTNY.

Position 169 to 176 (169 to 176) interacts with ATP; that stretch reads GDRQTGKT.

The protein belongs to the ATPase alpha/beta chains family. As to quaternary structure, F-type ATPases have 2 components, CF(1) - the catalytic core - and CF(0) - the membrane proton channel. CF(1) has five subunits: alpha(3), beta(3), gamma(1), delta(1), epsilon(1). CF(0) has three main subunits: a(1), b(2) and c(9-12). The alpha and beta chains form an alternating ring which encloses part of the gamma chain. CF(1) is attached to CF(0) by a central stalk formed by the gamma and epsilon chains, while a peripheral stalk is formed by the delta and b chains.

The protein localises to the cell membrane. The enzyme catalyses ATP + H2O + 4 H(+)(in) = ADP + phosphate + 5 H(+)(out). Produces ATP from ADP in the presence of a proton gradient across the membrane. The alpha chain is a regulatory subunit. This Lactococcus lactis subsp. cremoris (strain MG1363) protein is ATP synthase subunit alpha.